A 356-amino-acid chain; its full sequence is Probable arabinogalactan endo-beta-1,4-galactanase A (356 aa).

Positions Met1 to Ala21 are cleaved as a signal peptide. The N-linked (GlcNAc...) asparagine glycan is linked to Asn133. Glu157 acts as the Proton donor in catalysis. Glu268 functions as the Nucleophile in the catalytic mechanism.

This sequence belongs to the glycosyl hydrolase 53 family.

Its subcellular location is the secreted. The enzyme catalyses The enzyme specifically hydrolyzes (1-&gt;4)-beta-D-galactosidic linkages in type I arabinogalactans.. Endogalactanase involved in the degradation of plant cell wall polysaccharides, and more particularly of hairy regions of pectin. This chain is Probable arabinogalactan endo-beta-1,4-galactanase A (galA), found in Neosartorya fischeri (strain ATCC 1020 / DSM 3700 / CBS 544.65 / FGSC A1164 / JCM 1740 / NRRL 181 / WB 181) (Aspergillus fischerianus).